The chain runs to 157 residues: 6,7-dimethyl-8-ribityllumazine synthase (157 aa).

Residues Phe23, 57–59 (AFE), and 81–83 (AVI) contribute to the 5-amino-6-(D-ribitylamino)uracil site. 86-87 (ST) contacts (2S)-2-hydroxy-3-oxobutyl phosphate. His89 serves as the catalytic Proton donor. Phe114 contributes to the 5-amino-6-(D-ribitylamino)uracil binding site. Residue Arg128 coordinates (2S)-2-hydroxy-3-oxobutyl phosphate.

It belongs to the DMRL synthase family.

The enzyme catalyses (2S)-2-hydroxy-3-oxobutyl phosphate + 5-amino-6-(D-ribitylamino)uracil = 6,7-dimethyl-8-(1-D-ribityl)lumazine + phosphate + 2 H2O + H(+). It functions in the pathway cofactor biosynthesis; riboflavin biosynthesis; riboflavin from 2-hydroxy-3-oxobutyl phosphate and 5-amino-6-(D-ribitylamino)uracil: step 1/2. Functionally, catalyzes the formation of 6,7-dimethyl-8-ribityllumazine by condensation of 5-amino-6-(D-ribitylamino)uracil with 3,4-dihydroxy-2-butanone 4-phosphate. This is the penultimate step in the biosynthesis of riboflavin. The chain is 6,7-dimethyl-8-ribityllumazine synthase from Desulfosudis oleivorans (strain DSM 6200 / JCM 39069 / Hxd3) (Desulfococcus oleovorans).